Consider the following 123-residue polypeptide: uncharacterized protein (123 aa).

Residues 1–21 (MHIIAKSILLMAVSFLVIIFT) form a helical membrane-spanning segment.

It localises to the membrane. This is an uncharacterized protein from Methanocaldococcus jannaschii (strain ATCC 43067 / DSM 2661 / JAL-1 / JCM 10045 / NBRC 100440) (Methanococcus jannaschii).